A 320-amino-acid chain; its full sequence is Putative malonate transporter (320 aa).

The next 8 helical transmembrane spans lie at 1 to 21 (MAEI…GYLT), 32 to 52 (MGWL…FKLV), 65 to 85 (FILT…AIGL), 113 to 133 (GLAL…IFCF), 167 to 187 (IAFH…FLSF), 196 to 216 (LIDY…GVTL), 256 to 276 (IWVQ…VFVI), and 289 to 309 (ATIL…LYLI).

The protein belongs to the auxin efflux carrier (TC 2.A.69) family.

The protein resides in the cell membrane. The chain is Putative malonate transporter (mdcF) from Rhizobium meliloti (strain 1021) (Ensifer meliloti).